The chain runs to 655 residues: p-hydroxybenzoic acid efflux pump subunit AaeB (655 aa).

The next 11 membrane-spanning stretches (helical) occupy residues 13–33 (FAVK…HFQL), 38–58 (WAVL…GGEP), 69–89 (LRII…IAMI), 93–113 (LLMI…SSLV), 121–141 (WGLA…EPLL), 152–172 (EIVI…PRSI), 370–390 (LFWL…IAVV), 407–427 (FIYG…VIIP), 431–451 (QSML…GIEV), 459–479 (MGAL…TFHF), and 482–502 (FLDS…VILL).

The protein belongs to the aromatic acid exporter ArAE (TC 2.A.85) family.

It is found in the cell inner membrane. In terms of biological role, forms an efflux pump with AaeA. Could function as a metabolic relief valve, allowing to eliminate certain compounds when they accumulate to high levels in the cell. This is p-hydroxybenzoic acid efflux pump subunit AaeB from Escherichia coli O6:K15:H31 (strain 536 / UPEC).